Here is an 848-residue protein sequence, read N- to C-terminus: DNA mismatch repair protein MutS (848 aa).

Position 605–612 (605–612 (GPNMAGKS)) interacts with ATP.

The protein belongs to the DNA mismatch repair MutS family.

Its function is as follows. This protein is involved in the repair of mismatches in DNA. It is possible that it carries out the mismatch recognition step. This protein has a weak ATPase activity. This chain is DNA mismatch repair protein MutS, found in Leptospira interrogans serogroup Icterohaemorrhagiae serovar Lai (strain 56601).